Reading from the N-terminus, the 105-residue chain is Large ribosomal subunit protein uL24 (105 aa).

The protein belongs to the universal ribosomal protein uL24 family. Part of the 50S ribosomal subunit.

One of two assembly initiator proteins, it binds directly to the 5'-end of the 23S rRNA, where it nucleates assembly of the 50S subunit. In terms of biological role, one of the proteins that surrounds the polypeptide exit tunnel on the outside of the subunit. The protein is Large ribosomal subunit protein uL24 of Clostridium botulinum (strain ATCC 19397 / Type A).